The chain runs to 98 residues: Large ribosomal subunit protein uL23 (98 aa).

Belongs to the universal ribosomal protein uL23 family. As to quaternary structure, part of the 50S ribosomal subunit. Contacts protein L29, and trigger factor when it is bound to the ribosome.

One of the early assembly proteins it binds 23S rRNA. One of the proteins that surrounds the polypeptide exit tunnel on the outside of the ribosome. Forms the main docking site for trigger factor binding to the ribosome. The chain is Large ribosomal subunit protein uL23 from Gluconacetobacter diazotrophicus (strain ATCC 49037 / DSM 5601 / CCUG 37298 / CIP 103539 / LMG 7603 / PAl5).